Here is a 1070-residue protein sequence, read N- to C-terminus: DNA double-strand break repair Rad50 ATPase (1070 aa).

Residues R12, 32–38, and Q142 contribute to the ATP site; that span reads NGSGKSS. Coiled-coil stretches lie at residues 227–257, 369–403, and 449–478; these read LEELNKKKEFAAARKGELDLRIAEYRERLQE, ECRTSIGAANKEIEGYRANIKQLEEENKRLREKAG, and LRELDSEMQSCRVAVSKGKSEIEALEKEIR. The Zinc-hook domain maps to 508–607; that stretch reads LENLEDFNEL…KLNRLKEAKK (100 aa). Zn(2+) is bound by residues C555 and C558. Coiled coils occupy residues 570-614 and 878-908; these read TAEE…QAYD and LKRLKELKEELKALENKRLYLEAVYNNADEL. Position 969 to 974 (969 to 974) interacts with ATP; it reads LLSGGE.

This sequence belongs to the SMC family. RAD50 subfamily. In terms of assembly, homodimer. Forms a heterotetramer composed of two Mre11 subunits and two Rad50 subunits. Zn(2+) serves as cofactor.

Part of the Rad50/Mre11 complex, which is involved in the early steps of DNA double-strand break (DSB) repair. The complex may facilitate opening of the processed DNA ends to aid in the recruitment of HerA and NurA. Rad50 controls the balance between DNA end bridging and DNA resection via ATP-dependent structural rearrangements of the Rad50/Mre11 complex. This chain is DNA double-strand break repair Rad50 ATPase, found in Methanosarcina mazei (strain ATCC BAA-159 / DSM 3647 / Goe1 / Go1 / JCM 11833 / OCM 88) (Methanosarcina frisia).